Here is a 1149-residue protein sequence, read N- to C-terminus: Golgi apparatus protein 1 homolog (1149 aa).

Positions 1-19 (MWRFPLILASVCWLTTAQQ) are cleaved as a signal peptide. At 20-1115 (QNVANDPDKK…NLVMEHPERN (1096 aa)) the chain is on the extracellular side. 16 Cys-rich GLG1 repeats span residues 24 to 69 (NDPD…FSET), 71 to 135 (TLSE…KNVT), 139 to 207 (KCHA…VKNA), 216 to 276 (ILGD…NDKF), 277 to 344 (MDPE…NQPE), 349 to 411 (QPSK…ESRN), 415 to 475 (KLGA…NVDS), 477 to 549 (DMVP…YDEQ), 551 to 610 (PLSV…ETDN), 613 to 676 (RKHP…DAKE), 677 to 736 (MNNK…FEHK), 743 to 803 (DLTD…IECL), 809 to 867 (HLGP…IVRL), 868 to 938 (LQRE…RQSI), 945 to 1009 (DFSP…NKGL), and 1010 to 1070 (IRDK…DKQE). A glycan (N-linked (GlcNAc...) asparagine) is linked at asparagine 133. N-linked (GlcNAc...) asparagine glycosylation occurs at asparagine 411. A helical membrane pass occupies residues 1116-1136 (SILGYLAGFIVFILLIGCCCG). Residues 1137 to 1149 (RVSKKQYIEMKNR) are Cytoplasmic-facing.

It is found in the membrane. The polypeptide is Golgi apparatus protein 1 homolog (Caenorhabditis elegans).